A 179-amino-acid polypeptide reads, in one-letter code: MAELATIARPYAEALFGVAEAGDIAAWSTLVQELAQVARLPEVLSIASSPKVSRAQVSELLLAAVKSPLKDNAQAKNLVQMLVDNHRLQLLPEIAVQFEELKNAREGAADVLIVSAFPLEGAQLNDLVASLERKFKRKLKPTVEIDPSLIGGVRVTVGDEVLDTSVRARLASMQTALTA.

Belongs to the ATPase delta chain family. As to quaternary structure, F-type ATPases have 2 components, F(1) - the catalytic core - and F(0) - the membrane proton channel. F(1) has five subunits: alpha(3), beta(3), gamma(1), delta(1), epsilon(1). F(0) has three main subunits: a(1), b(2) and c(10-14). The alpha and beta chains form an alternating ring which encloses part of the gamma chain. F(1) is attached to F(0) by a central stalk formed by the gamma and epsilon chains, while a peripheral stalk is formed by the delta and b chains.

It localises to the cell inner membrane. F(1)F(0) ATP synthase produces ATP from ADP in the presence of a proton or sodium gradient. F-type ATPases consist of two structural domains, F(1) containing the extramembraneous catalytic core and F(0) containing the membrane proton channel, linked together by a central stalk and a peripheral stalk. During catalysis, ATP synthesis in the catalytic domain of F(1) is coupled via a rotary mechanism of the central stalk subunits to proton translocation. In terms of biological role, this protein is part of the stalk that links CF(0) to CF(1). It either transmits conformational changes from CF(0) to CF(1) or is implicated in proton conduction. The chain is ATP synthase subunit delta from Paraburkholderia phytofirmans (strain DSM 17436 / LMG 22146 / PsJN) (Burkholderia phytofirmans).